Here is a 231-residue protein sequence, read N- to C-terminus: Large ribosomal subunit protein uL1 (231 aa).

This sequence belongs to the universal ribosomal protein uL1 family. As to quaternary structure, part of the 50S ribosomal subunit.

In terms of biological role, binds directly to 23S rRNA. The L1 stalk is quite mobile in the ribosome, and is involved in E site tRNA release. Its function is as follows. Protein L1 is also a translational repressor protein, it controls the translation of the L11 operon by binding to its mRNA. In Nitrosomonas eutropha (strain DSM 101675 / C91 / Nm57), this protein is Large ribosomal subunit protein uL1.